A 334-amino-acid polypeptide reads, in one-letter code: Formamidase (334 aa).

Positions 14-260 (FLVAAIQFPV…WEIVTGEIYP (247 aa)) constitute a CN hydrolase domain. Glutamate 60 acts as the Proton acceptor in catalysis. Lysine 133 acts as the Proton donor in catalysis. Cysteine 166 acts as the Nucleophile in catalysis.

The protein belongs to the carbon-nitrogen hydrolase superfamily. Aliphatic amidase family. In terms of assembly, homotetramer.

It carries out the reaction formamide + H2O = formate + NH4(+). With respect to regulation, inhibited by iodoacetate. Appears to be regulated by the fur protein, but this effect is not mediated at the transcriptional level. In terms of biological role, is an aliphatic amidase with a restricted substrate specificity, as it only hydrolyzes formamide. Probably involved in the nitrogen metabolism of H.pylori. This is Formamidase (amiF) from Helicobacter pylori (strain ATCC 700392 / 26695) (Campylobacter pylori).